Consider the following 360-residue polypeptide: BLOC-1-related complex subunit 6 (360 aa).

Basic and acidic residues predominate over residues 1-10 (MEAARGRLGP). The disordered stretch occupies residues 1 to 201 (MEAARGRLGP…AGAGGGRRAT (201 aa)). A compositionally biased stretch (polar residues) spans 23 to 35 (VTFSGRPSRTLSK). At Thr-41 the chain carries Phosphothreonine. Positions 71-83 (HRPELDTWEDKPS) are enriched in basic and acidic residues. Low complexity predominate over residues 89-100 (SGARGSRGTSGS). At Ser-130 the chain carries Phosphoserine. A compositionally biased stretch (acidic residues) spans 144-156 (EGDDDDDGDDEEA). A Phosphoserine modification is found at Ser-173. Positions 179-198 (GACGGGGSSSSGEAGAGGGR) are enriched in gly residues. Thr-201 is subject to Phosphothreonine. The residue at position 204 (Ser-204) is a Phosphoserine.

It belongs to the BORCS6 family. Component of the BLOC-one-related complex (BORC) which is composed of BLOC1S1, BLOC1S2, BORCS5, BORCS6, BORCS7, BORCS8, KXD1 and SNAPIN.

It localises to the lysosome membrane. Its function is as follows. As part of the BORC complex may play a role in lysosomes movement and localization at the cell periphery. Associated with the cytosolic face of lysosomes, the BORC complex may recruit ARL8B and couple lysosomes to microtubule plus-end-directed kinesin motor. In Rattus norvegicus (Rat), this protein is BLOC-1-related complex subunit 6.